The chain runs to 152 residues: Small ribosomal subunit protein bS6 (152 aa).

A disordered region spans residues 96–152 (HEEGPSAMLQKRDRDDRGPREGGDRGPRREFGDRPPRRDGDFQRGPRPDRAPREDRA).

The protein belongs to the bacterial ribosomal protein bS6 family.

Binds together with bS18 to 16S ribosomal RNA. In Rhizobium etli (strain CIAT 652), this protein is Small ribosomal subunit protein bS6.